A 43-amino-acid chain; its full sequence is Lanthionine-containing peptide SapB (43 aa).

An N-terminal signal peptide occupies residues 1 to 21 (MALLDLQAMDTPAEDSFGELA). 2 consecutive cross-links (lanthionine (Ser-Cys)) follow at residues 24–31 (SQVSLLVC) and 34–41 (SSLSVVLC). 2,3-didehydroalanine (Ser) occurs at positions 27 and 37.

The protein belongs to the lanthionine-containing morphogen protein family. Post-translationally, maturation involves the enzymatic conversion of Ser into dehydrated AA and the formation of thioether bonds with cysteine. This is followed by membrane translocation and cleavage of the modified precursor.

Lanthionine-containing peptide devoid of antibiotic properties, involved in the formation of aerial mycelium. Suggested to self-assemble at air-water interfaces, thus providing a film of surfactant through which nascent aerial hyphae can emerge. The aerial hyphae differentiate further into spores. The polypeptide is Lanthionine-containing peptide SapB (ramS) (Streptomyces griseus subsp. griseus (strain JCM 4626 / CBS 651.72 / NBRC 13350 / KCC S-0626 / ISP 5235)).